Reading from the N-terminus, the 439-residue chain is Ribosomal protein uS12 methylthiotransferase RimO (439 aa).

The region spanning 2-114 is the MTTase N-terminal domain; the sequence is SKLYLMSLGC…VDEMILKKTN (113 aa). Residues C11, C45, C77, C146, C150, and C153 each contribute to the [4Fe-4S] cluster site. The Radical SAM core domain occupies 132-363; it reads TGSNSHAFIK…VNEVIEKSFE (232 aa).

The protein belongs to the methylthiotransferase family. RimO subfamily. Requires [4Fe-4S] cluster as cofactor.

The protein localises to the cytoplasm. It catalyses the reaction L-aspartate(89)-[ribosomal protein uS12]-hydrogen + (sulfur carrier)-SH + AH2 + 2 S-adenosyl-L-methionine = 3-methylsulfanyl-L-aspartate(89)-[ribosomal protein uS12]-hydrogen + (sulfur carrier)-H + 5'-deoxyadenosine + L-methionine + A + S-adenosyl-L-homocysteine + 2 H(+). Catalyzes the methylthiolation of an aspartic acid residue of ribosomal protein uS12. In Campylobacter jejuni (strain RM1221), this protein is Ribosomal protein uS12 methylthiotransferase RimO.